A 422-amino-acid polypeptide reads, in one-letter code: G-protein coupled receptor 151 protein (422 aa).

The Extracellular portion of the chain corresponds to 1–45; it reads MGKAMLRAGFADTNSSNMNESFARLHFAGGYLPSDSKDWRTIIPS. Residues Asn-14 and Asn-19 are each glycosylated (N-linked (GlcNAc...) asparagine). A helical transmembrane segment spans residues 46–66; it reads LLMAVCLVGLVGNLCVIGILL. The Cytoplasmic segment spans residues 67–76; sequence HGVWKRKPST. The chain crosses the membrane as a helical span at residues 77–97; it reads IHSLILNLSLADFSLLLFSAP. The Extracellular segment spans residues 98-123; the sequence is VRAAAYSKGVWDLGWFICKSSDWFTH. A disulfide bridge links Cys-115 with Cys-191. A helical transmembrane segment spans residues 124–144; sequence VCMAAKSLTFVVVAKACFAYA. Residues 145 to 157 are Cytoplasmic-facing; sequence SDPAKQESIHSRT. The chain crosses the membrane as a helical span at residues 158 to 178; it reads IWSVLAGIWVVASLLPLPEWL. The Extracellular segment spans residues 179 to 205; the sequence is FSTTRRHAGVEMCLVDVPAVAEEFMSM. The chain crosses the membrane as a helical span at residues 206–226; it reads FGKLYPLLVFCLPLLLAGVYF. At 227–259 the chain is on the cytoplasmic side; the sequence is WRAYDQCKTRCTKTRNLRDQMRSKQLTVMLLST. Residues 260-280 form a helical membrane-spanning segment; the sequence is AIISALLWLPEWIAWLWVWHV. Residues 281–290 are Extracellular-facing; sequence KAGGPMPPQG. Residues 291-311 form a helical membrane-spanning segment; the sequence is FIALSQVLMFFTSTANPLIFL. Residues 312–422 lie on the Cytoplasmic side of the membrane; the sequence is VMSEEFKAGL…HEGQETEGCN (111 aa). Positions 339–422 are disordered; sequence VQEAPAGNTE…HEGQETEGCN (84 aa). The segment covering 366-380 has biased composition (basic and acidic residues); sequence TDGRGSPDDSKEKSG.

High expression in the brain and lower levels in kidney and liver. In the nervous system expressed specifically in the habenular area (at protein level).

The protein resides in the cell membrane. Functionally, proton-sensing G-protein coupled receptor. The protein is G-protein coupled receptor 151 protein (Gpr151) of Mus musculus (Mouse).